A 284-amino-acid polypeptide reads, in one-letter code: Pantothenate synthetase (284 aa).

30-37 (MGNLHEGH) is a binding site for ATP. The active-site Proton donor is histidine 37. Glutamine 61 is a binding site for (R)-pantoate. Residue glutamine 61 coordinates beta-alanine. 149–152 (GEKD) provides a ligand contact to ATP. A (R)-pantoate-binding site is contributed by glutamine 155. ATP is bound by residues valine 178 and 186–189 (LSSR).

Belongs to the pantothenate synthetase family. As to quaternary structure, homodimer.

The protein resides in the cytoplasm. It catalyses the reaction (R)-pantoate + beta-alanine + ATP = (R)-pantothenate + AMP + diphosphate + H(+). Its pathway is cofactor biosynthesis; (R)-pantothenate biosynthesis; (R)-pantothenate from (R)-pantoate and beta-alanine: step 1/1. In terms of biological role, catalyzes the condensation of pantoate with beta-alanine in an ATP-dependent reaction via a pantoyl-adenylate intermediate. The sequence is that of Pantothenate synthetase from Yersinia pseudotuberculosis serotype O:1b (strain IP 31758).